The primary structure comprises 301 residues: Probable alpha-L-glutamate ligase (301 aa).

The region spanning 104–287 is the ATP-grasp domain; it reads LQLLSRKGIG…VAGMIIQYLE (184 aa). Residues lysine 141, 178–179, aspartate 187, and 211–213 each bind ATP; these read EY and RSN. Mg(2+)-binding residues include aspartate 248, glutamate 260, and asparagine 262. Positions 248, 260, and 262 each coordinate Mn(2+).

It belongs to the RimK family. Mg(2+) serves as cofactor. Mn(2+) is required as a cofactor.

In Ectopseudomonas mendocina (strain ymp) (Pseudomonas mendocina), this protein is Probable alpha-L-glutamate ligase.